Consider the following 747-residue polypeptide: Protein PHTF2 (747 aa).

The PHTF domain occupies 6 to 153 (TDAIVWYQKK…VHCQIVSTRT (148 aa)). Helical transmembrane passes span 98-118 (VIFS…VLFC) and 126-146 (IPLT…TVHC). Disordered stretches follow at residues 170–192 (KAAH…TQEG) and 268–365 (EDAA…SETE). The segment covering 172–181 (AHLEVHREGD) has biased composition (basic and acidic residues). Residues 182–192 (GSSTTDNTQEG) are compositionally biased toward polar residues. Residue Asn-291 is glycosylated (N-linked (GlcNAc...) asparagine). Residues 321 to 331 (RNRKPHHYKKH) show a composition bias toward basic residues. The span at 340–352 (SGTSCSSRCSSSR) shows a compositional bias: low complexity. Over residues 353 to 362 (QDSESTRPES) the composition is skewed to basic and acidic residues. A run of 4 helical transmembrane segments spans residues 459–479 (IGYQ…PFVF), 515–535 (VLIS…LLCV), 596–616 (VIVS…CAQL), and 630–650 (WELV…VTLG). N-linked (GlcNAc...) asparagine glycosylation is found at Asn-659 and Asn-718. Residues 722–742 (VVILSAVSGVISDLLGFNLKL) traverse the membrane as a helical segment.

Its subcellular location is the membrane. This chain is Protein PHTF2 (Phtf2), found in Mus musculus (Mouse).